The primary structure comprises 246 residues: Biosynthetic peptidoglycan transglycosylase (246 aa).

The helical transmembrane segment at 27–47 threads the bilayer; it reads VVFCFFFAVFALLLIFRFVPI.

The protein belongs to the glycosyltransferase 51 family.

Its subcellular location is the cell inner membrane. The catalysed reaction is [GlcNAc-(1-&gt;4)-Mur2Ac(oyl-L-Ala-gamma-D-Glu-L-Lys-D-Ala-D-Ala)](n)-di-trans,octa-cis-undecaprenyl diphosphate + beta-D-GlcNAc-(1-&gt;4)-Mur2Ac(oyl-L-Ala-gamma-D-Glu-L-Lys-D-Ala-D-Ala)-di-trans,octa-cis-undecaprenyl diphosphate = [GlcNAc-(1-&gt;4)-Mur2Ac(oyl-L-Ala-gamma-D-Glu-L-Lys-D-Ala-D-Ala)](n+1)-di-trans,octa-cis-undecaprenyl diphosphate + di-trans,octa-cis-undecaprenyl diphosphate + H(+). It participates in cell wall biogenesis; peptidoglycan biosynthesis. Functionally, peptidoglycan polymerase that catalyzes glycan chain elongation from lipid-linked precursors. The polypeptide is Biosynthetic peptidoglycan transglycosylase (Haemophilus influenzae (strain ATCC 51907 / DSM 11121 / KW20 / Rd)).